Here is a 72-residue protein sequence, read N- to C-terminus: DNA-directed RNA polymerase subunit omega (72 aa).

The protein belongs to the RNA polymerase subunit omega family. The RNAP catalytic core consists of 2 alpha, 1 beta, 1 beta' and 1 omega subunit. When a sigma factor is associated with the core the holoenzyme is formed, which can initiate transcription.

It catalyses the reaction RNA(n) + a ribonucleoside 5'-triphosphate = RNA(n+1) + diphosphate. Promotes RNA polymerase assembly. Latches the N- and C-terminal regions of the beta' subunit thereby facilitating its interaction with the beta and alpha subunits. The polypeptide is DNA-directed RNA polymerase subunit omega (Francisella tularensis subsp. holarctica (strain LVS)).